The chain runs to 886 residues: Alanine--tRNA ligase (886 aa).

Positions 564, 568, 666, and 670 each coordinate Zn(2+).

The protein belongs to the class-II aminoacyl-tRNA synthetase family. Requires Zn(2+) as cofactor.

Its subcellular location is the cytoplasm. It carries out the reaction tRNA(Ala) + L-alanine + ATP = L-alanyl-tRNA(Ala) + AMP + diphosphate. Its function is as follows. Catalyzes the attachment of alanine to tRNA(Ala) in a two-step reaction: alanine is first activated by ATP to form Ala-AMP and then transferred to the acceptor end of tRNA(Ala). Also edits incorrectly charged Ser-tRNA(Ala) and Gly-tRNA(Ala) via its editing domain. The chain is Alanine--tRNA ligase from Prochlorococcus marinus (strain AS9601).